A 268-amino-acid polypeptide reads, in one-letter code: Zinc finger protein SNAI2 (268 aa).

The segment at 1 to 20 is SNAG domain; sequence MPRSFLVKKHFNASKKPNYS. A disordered region spans residues 80–117; that stretch reads PASLGRVSPPPPSDTSSKDHSGSESPISDEEERLQSKL. 4 C2H2-type zinc fingers span residues 128 to 150, 159 to 181, 185 to 207, and 213 to 235; these read FQCNLCNKTYSTFSGLGKHKQLH, FSCKYCDKEYVSLGALKMHIRTH, CVCKICGKAFSRPWLLQGHIRTH, and FSCSHCSRAFADRSNLRAHLQTH. A C2H2-type 5; atypical zinc finger spans residues 241 to 264; sequence YQCKSCSKTFSRMSLLHKHEESGC.

This sequence belongs to the snail C2H2-type zinc-finger protein family. Interacts (via SNAG domain) with LIMD1 (via LIM domains), WTIP (via LIM domains) and AJUBA (via LIM domains). Interacts (via zinc fingers) with KPNA2, KPNB1, and TNPO1. May interact (via zinc fingers) with IPO7. Phosphorylated by GSK3B. Once phosphorylated, it becomes a target for ubiquitination. In terms of processing, ubiquitinated by the SCF(FBXO11) complex; ubiquitination requires previous GSK3B-mediated SNAI2 phosphorylation.

It is found in the nucleus. The protein resides in the cytoplasm. Its function is as follows. Transcriptional repressor that modulates both activator-dependent and basal transcription. Involved in the generation and migration of neural crest cells. Plays a role in mediating RAF1-induced transcriptional repression of the TJ protein, occludin (OCLN) and subsequent oncogenic transformation of epithelial cells. Represses BRCA2 expression by binding to its E2-box-containing silencer and recruiting CTBP1 and HDAC1 in breast cells. In epidermal keratinocytes, binds to the E-box in ITGA3 promoter and represses its transcription. Involved in the regulation of ITGB1 and ITGB4 expression and cell adhesion and proliferation in epidermal keratinocytes. Binds to E-box2 domain of BSG and activates its expression during TGFB1-induced epithelial-mesenchymal transition (EMT) in hepatocytes. Represses E-Cadherin/CDH1 transcription via E-box elements. Involved in osteoblast maturation. Binds to RUNX2 and SOC9 promoters and may act as a positive and negative transcription regulator, respectively, in osteoblasts. Binds to CXCL12 promoter via E-box regions in mesenchymal stem cells and osteoblasts. Plays an essential role in TWIST1-induced EMT and its ability to promote invasion and metastasis. The chain is Zinc finger protein SNAI2 (SNAI2) from Bos taurus (Bovine).